Consider the following 286-residue polypeptide: MSAIDDLPPLREVIREHQLSARKALGQNFLLDLNLTARIARAAGPLEDATVVEIGPGPGGLTRALLALGARHVIAVEHDERAIPALRTIADRYPGRLEIVYTDARTFDVRPYLGSTKAKIVANLPYNIATHLLIGWLSAEPWPPWYEMMVLMFQREVAERIVATENEEAYGRLGVLANWRCETKILFDISPSAFVPPPKVTSSVVRLVPRPAPEPCDRRALEQVAAAAFGQRRKMLRQSLKSLPADPARLAAAAGIDPTRRAETIPVSGFVAMARELTNSRNDNTT.

S-adenosyl-L-methionine is bound by residues asparagine 28, leucine 30, glycine 55, glutamate 77, aspartate 103, and asparagine 123.

The protein belongs to the class I-like SAM-binding methyltransferase superfamily. rRNA adenine N(6)-methyltransferase family. RsmA subfamily.

It is found in the cytoplasm. The catalysed reaction is adenosine(1518)/adenosine(1519) in 16S rRNA + 4 S-adenosyl-L-methionine = N(6)-dimethyladenosine(1518)/N(6)-dimethyladenosine(1519) in 16S rRNA + 4 S-adenosyl-L-homocysteine + 4 H(+). Functionally, specifically dimethylates two adjacent adenosines (A1518 and A1519) in the loop of a conserved hairpin near the 3'-end of 16S rRNA in the 30S particle. May play a critical role in biogenesis of 30S subunits. The chain is Ribosomal RNA small subunit methyltransferase A from Bradyrhizobium sp. (strain ORS 278).